The following is a 446-amino-acid chain: Phosphoglucosamine mutase (446 aa).

Catalysis depends on S101, which acts as the Phosphoserine intermediate. Mg(2+) contacts are provided by S101, D240, D242, and D244. S101 is modified (phosphoserine).

It belongs to the phosphohexose mutase family. Requires Mg(2+) as cofactor. In terms of processing, activated by phosphorylation.

It catalyses the reaction alpha-D-glucosamine 1-phosphate = D-glucosamine 6-phosphate. Catalyzes the conversion of glucosamine-6-phosphate to glucosamine-1-phosphate. This Coxiella burnetii (strain CbuK_Q154) (Coxiella burnetii (strain Q154)) protein is Phosphoglucosamine mutase.